A 151-amino-acid polypeptide reads, in one-letter code: 3-dehydroquinate dehydratase (151 aa).

Tyrosine 24 functions as the Proton acceptor in the catalytic mechanism. Residues asparagine 76, histidine 82, and aspartate 89 each coordinate substrate. The Proton donor role is filled by histidine 102. Substrate-binding positions include 103-104 (VS) and arginine 113.

The protein belongs to the type-II 3-dehydroquinase family. As to quaternary structure, homododecamer.

The enzyme catalyses 3-dehydroquinate = 3-dehydroshikimate + H2O. It functions in the pathway metabolic intermediate biosynthesis; chorismate biosynthesis; chorismate from D-erythrose 4-phosphate and phosphoenolpyruvate: step 3/7. In terms of biological role, catalyzes a trans-dehydration via an enolate intermediate. The chain is 3-dehydroquinate dehydratase from Rhodopseudomonas palustris (strain ATCC BAA-98 / CGA009).